Consider the following 260-residue polypeptide: MKTFDSQAENSPAVIGRSLRNRPLARKKLSEMVEEELEQMIRRKEFGEGEQLPSERELMAFFNVGRPSVREALAALKRKGLVQINNGERARVSRPSADTIIGELSGMAKDFLAHPGGIAHFEQLRLFFESSLVRYAAENATDAQIDLLAKALEINSQSLDDNALFIRSDVDFHRVLAEIPGNPIFKAIHVALLDWLIAARPTVPDRELYEHNSVSYQQHIAIVDAIRQRDPDAADRALQTHLNSVSATWHALGQQSKRKK.

An HTH gntR-type domain is found at 27–95 (KKLSEMVEEE…NGERARVSRP (69 aa)). Positions 55–74 (ERELMAFFNVGRPSVREALA) form a DNA-binding region, H-T-H motif.

This sequence belongs to the NanR family.

In terms of biological role, transcriptional repressor that controls expression of the genes required for the catabolism of sialic acids. The polypeptide is HTH-type transcriptional repressor NanR (Citrobacter rodentium (strain ICC168) (Citrobacter freundii biotype 4280)).